Reading from the N-terminus, the 452-residue chain is Nebulette (452 aa).

Residues 1 to 26 are disordered; it reads MKVPVSGDVKEETEEENVEQEENQEA. The segment covering 11-23 has biased composition (acidic residues); that stretch reads EETEEENVEQEEN. Nebulin repeat units lie at residues 29–63, 64–98, 101–135, 138–172, 173–199, 206–240, 263–278, 279–313, 315–349, 352–386, 389–423, and 426–452; these read SLKP…KSKD, KCTF…ADLS, LYKD…AEKG, DYTH…GTHT, YTAE…EYKK, KEPS…NEMK, LASD…ENKG, LYHF…KNKG, SMLE…KEIK, SSLD…NEIK, GMEL…TEIK, and GMQV…VRMV.

As to quaternary structure, interacts (via nebulin repeats 1-5) with DESM (via rod region). Interacts (via SH3 domain) with XIRP2.

It is found in the cytoplasm. Functionally, binds to actin and plays an important role in the assembly of the Z-disk. May functionally link sarcomeric actin to the desmin intermediate filaments in the heart muscle sarcomeres. Isoform 2 might play a role in the assembly of focal adhesion. This Mus musculus (Mouse) protein is Nebulette (Nebl).